The following is a 394-amino-acid chain: Elongation factor Tu (394 aa).

A tr-type G domain is found at 10-204 (KPHVNIGTIG…AVDSYIPQPV (195 aa)). Residues 19 to 26 (GHVDHGKT) form a G1 region. Residue 19-26 (GHVDHGKT) coordinates GTP. Position 26 (threonine 26) interacts with Mg(2+). Residues 60–64 (GITIS) are G2. The segment at 81–84 (DCPG) is G3. GTP contacts are provided by residues 81-85 (DCPGH) and 136-139 (NKVD). The interval 136–139 (NKVD) is G4. The G5 stretch occupies residues 174 to 176 (SAL).

The protein belongs to the TRAFAC class translation factor GTPase superfamily. Classic translation factor GTPase family. EF-Tu/EF-1A subfamily. Monomer.

Its subcellular location is the cytoplasm. It carries out the reaction GTP + H2O = GDP + phosphate + H(+). Functionally, GTP hydrolase that promotes the GTP-dependent binding of aminoacyl-tRNA to the A-site of ribosomes during protein biosynthesis. The sequence is that of Elongation factor Tu from Rickettsia felis (strain ATCC VR-1525 / URRWXCal2) (Rickettsia azadi).